We begin with the raw amino-acid sequence, 221 residues long: Probable serine protease inhibitor 6 (221 aa).

The signal sequence occupies residues 1 to 22 (MKCLFLLCLCLFPIVVFSSTFT). Positions 23 to 28 (SQNPIN) are excised as a propeptide. A Vacuolar targeting signal motif is present at residues 25–30 (NPINLP). Intrachain disulfides connect Cys-76–Cys-125 and Cys-174–Cys-191.

Belongs to the protease inhibitor I3 (leguminous Kunitz-type inhibitor) family.

Its subcellular location is the vacuole. Inhibitor of trypsin (serine protease). May protect the plant by inhibiting proteases of invading organisms. This is Probable serine protease inhibitor 6 from Solanum tuberosum (Potato).